We begin with the raw amino-acid sequence, 259 residues long: Type III pantothenate kinase (259 aa).

6-13 contributes to the ATP binding site; the sequence is DVGNTNCT. 107–110 contacts substrate; the sequence is GSDR. Asp109 (proton acceptor) is an active-site residue. Asp129 is a binding site for K(+). Thr132 provides a ligand contact to ATP. Thr184 is a binding site for substrate.

It belongs to the type III pantothenate kinase family. In terms of assembly, homodimer. NH4(+) serves as cofactor. It depends on K(+) as a cofactor.

Its subcellular location is the cytoplasm. It carries out the reaction (R)-pantothenate + ATP = (R)-4'-phosphopantothenate + ADP + H(+). It functions in the pathway cofactor biosynthesis; coenzyme A biosynthesis; CoA from (R)-pantothenate: step 1/5. In terms of biological role, catalyzes the phosphorylation of pantothenate (Pan), the first step in CoA biosynthesis. The chain is Type III pantothenate kinase from Listeria innocua serovar 6a (strain ATCC BAA-680 / CLIP 11262).